The sequence spans 254 residues: tRNA (guanine-N(1)-)-methyltransferase (254 aa).

S-adenosyl-L-methionine-binding positions include Gly-119 and 139–144 (IGDFVL).

The protein belongs to the RNA methyltransferase TrmD family. Homodimer.

It is found in the cytoplasm. The catalysed reaction is guanosine(37) in tRNA + S-adenosyl-L-methionine = N(1)-methylguanosine(37) in tRNA + S-adenosyl-L-homocysteine + H(+). Its function is as follows. Specifically methylates guanosine-37 in various tRNAs. The protein is tRNA (guanine-N(1)-)-methyltransferase of Dechloromonas aromatica (strain RCB).